Here is a 207-residue protein sequence, read N- to C-terminus: Large ribosomal subunit protein uL4 (207 aa).

A disordered region spans residues His49–Ile78. Residues Gly60–Gly71 show a composition bias toward basic residues.

It belongs to the universal ribosomal protein uL4 family. Part of the 50S ribosomal subunit.

In terms of biological role, one of the primary rRNA binding proteins, this protein initially binds near the 5'-end of the 23S rRNA. It is important during the early stages of 50S assembly. It makes multiple contacts with different domains of the 23S rRNA in the assembled 50S subunit and ribosome. Functionally, forms part of the polypeptide exit tunnel. The chain is Large ribosomal subunit protein uL4 from Latilactobacillus sakei subsp. sakei (strain 23K) (Lactobacillus sakei subsp. sakei).